Here is a 453-residue protein sequence, read N- to C-terminus: Acyl-coenzyme A thioesterase 2, mitochondrial (453 aa).

The N-terminal 42 residues, 1-42 (MVASSFAVLRASRLCQQDWKSWARLFVPPPLSTGGRTTWART), are a transit peptide targeting the mitochondrion. K83 carries the N6-acetyllysine modification. Active-site charge relay system residues include S273, D365, and H399. At K447 the chain carries N6-succinyllysine.

This sequence belongs to the C/M/P thioester hydrolase family. Monomer. Highly expressed in brown and white adipose tissue, muscle, heart, kidney, lung, adrenal gland and spleen; weakly expressed in intestine, testis and brain.

Its subcellular location is the mitochondrion matrix. The catalysed reaction is hexadecanoyl-CoA + H2O = hexadecanoate + CoA + H(+). It carries out the reaction tetradecanoyl-CoA + H2O = tetradecanoate + CoA + H(+). It catalyses the reaction octadecanoyl-CoA + H2O = octadecanoate + CoA + H(+). The enzyme catalyses eicosanoyl-CoA + H2O = eicosanoate + CoA + H(+). The catalysed reaction is decanoyl-CoA + H2O = decanoate + CoA + H(+). It carries out the reaction dodecanoyl-CoA + H2O = dodecanoate + CoA + H(+). It catalyses the reaction (9Z)-octadecenoyl-CoA + H2O = (9Z)-octadecenoate + CoA + H(+). The enzyme catalyses (9Z)-hexadecenoyl-CoA + H2O = (9Z)-hexadecenoate + CoA + H(+). The catalysed reaction is (9E)-octadecenoyl-CoA + H2O = (9E)-octadecenoate + CoA + H(+). It carries out the reaction (9Z,12Z)-octadecadienoyl-CoA + H2O = (9Z,12Z)-octadecadienoate + CoA + H(+). Its pathway is lipid metabolism; fatty acid metabolism. Catalyzes the hydrolysis of acyl-CoAs into free fatty acids and coenzyme A (CoASH), regulating their respective intracellular levels. Displays higher activity toward long chain acyl CoAs (C14-C20). The enzyme is involved in enhancing the hepatic fatty acid oxidation in mitochondria. The protein is Acyl-coenzyme A thioesterase 2, mitochondrial (Acot2) of Mus musculus (Mouse).